A 96-amino-acid chain; its full sequence is Protein transport protein Sec61 subunit beta (96 aa).

Positions 1-17 are enriched in polar residues; sequence MPGPTPSGTNVGSSGRS. The segment at 1–54 is disordered; it reads MPGPTPSGTNVGSSGRSPSKAVAARAAGSTVRQRKNASCGTRSAGRTTSAGTGG. Pro2 is modified (N-acetylproline). At 2 to 71 the chain is on the cytoplasmic side; sequence PGPTPSGTNV…DSPGLKVGPV (70 aa). At Ser7 the chain carries Phosphoserine. Position 9 is a phosphothreonine (Thr9). Phosphoserine is present on residues Ser13, Ser14, and Ser17. Cys39 is lipidated: S-palmitoyl cysteine. The segment covering 40-50 has biased composition (low complexity); sequence GTRSAGRTTSA. A helical membrane pass occupies residues 72–91; that stretch reads PVLVMSLLFIASVFMLHIWG. Residues 92-96 are Lumenal-facing; that stretch reads KYTRS.

It belongs to the SEC61-beta family. In terms of assembly, the SEC61 channel-forming translocon complex consists of channel-forming core components SEC61A1, SEC61B and SEC61G and different auxiliary components such as SEC62 and SEC63. The SEC61 channel associates with the multi-pass translocon (MPT) complex. Interacts with TRAM1.

Its subcellular location is the endoplasmic reticulum membrane. Its function is as follows. Component of SEC61 channel-forming translocon complex that mediates transport of signal peptide-containing precursor polypeptides across the endoplasmic reticulum (ER). Forms a ribosome receptor and a gated pore in the ER membrane, both functions required for cotranslational translocation of nascent polypeptides. The SEC61 channel is also involved in ER membrane insertion of transmembrane proteins: it mediates membrane insertion of the first few transmembrane segments of proteins, while insertion of subsequent transmembrane regions of multi-pass membrane proteins is mediated by the multi-pass translocon (MPT) complex. The SEC61 channel cooperates with the translocating protein TRAM1 to import nascent proteins into the ER. This Canis lupus familiaris (Dog) protein is Protein transport protein Sec61 subunit beta (SEC61B).